We begin with the raw amino-acid sequence, 1178 residues long: Mannosyltransferase regulator 4 (1178 aa).

At 1 to 27 (MLQRISSKLHRRFLSGLLRVKHYPLRR) the chain is on the cytoplasmic side. A helical; Signal-anchor for type II membrane protein transmembrane segment spans residues 28 to 48 (ILLPLILLQIIIITFIWSNSP). Topologically, residues 49–1178 (QRNGLGRDAD…KKKQEEGHSN (1130 aa)) are lumenal. The DXD signature appears at 519–521 (DFD). Residues 1041–1178 (EKKKKEEEEK…KKKQEEGHSN (138 aa)) are disordered. 6 consecutive repeat copies span residues 1042–1049 (KKKKEEEE), 1050–1057 (KKKKEEEE), 1058–1065 (KKKKEEEE), 1066–1073 (KKKKEEEE), 1074–1081 (KKKKEEEE), and 1082–1089 (KKKKEEEE). Residues 1042–1174 (KKKKEEEEKK…EEEEKKKQEE (133 aa)) form a 17 X 8 AA tandem repeats of K-K-K-K-E-E-E-E region. The stretch at 1090–1097 (KKKQEEEE) is one 7; approximate repeat. Repeat 8 spans residues 1098–1105 (KKKKEEEE). Residues 1106–1113 (KKKQEEGE) form a 9; approximate repeat. The stretch at 1114–1121 (KMKNEDEE) is one 10; approximate repeat. One copy of the 11; approximate repeat lies at 1122–1129 (NKKNEDEE). The stretch at 1130–1137 (KKKNEEEE) is repeat 12. Residues 1138–1144 (KKKQEEK) form a 13; approximate repeat. One copy of the 14; approximate repeat lies at 1145 to 1152 (NKKNEDEE). A 15; approximate repeat occupies 1153–1160 (KKKQEEEE). The 16; approximate repeat unit spans residues 1161–1168 (KKKNEEEE). The stretch at 1169–1174 (KKKQEE) is one 17; truncated repeat.

Belongs to the MNN4 family.

It is found in the golgi apparatus membrane. Functionally, golgi apparatus protein involved in N-glycan mannosylphosphorylation. While MNN4 seems to have a regulatory role in N-glycan mannosylphosphorylation, a transferase activity of MNN4 can not be ruled out. Mediates mannosylphosphate transfer in both the core and outer chain portions of N-linked oligosaccharides. Has partially redundant function with MNN14. The protein is Mannosyltransferase regulator 4 of Saccharomyces cerevisiae (strain ATCC 204508 / S288c) (Baker's yeast).